A 430-amino-acid polypeptide reads, in one-letter code: Enolase (430 aa).

Residue Q164 coordinates (2R)-2-phosphoglycerate. Catalysis depends on E208, which acts as the Proton donor. Mg(2+) contacts are provided by D245, E288, and D315. 4 residues coordinate (2R)-2-phosphoglycerate: K340, R369, S370, and K391. Residue K340 is the Proton acceptor of the active site.

The protein belongs to the enolase family. Requires Mg(2+) as cofactor.

The protein localises to the cytoplasm. It is found in the secreted. It localises to the cell surface. The enzyme catalyses (2R)-2-phosphoglycerate = phosphoenolpyruvate + H2O. It participates in carbohydrate degradation; glycolysis; pyruvate from D-glyceraldehyde 3-phosphate: step 4/5. Its function is as follows. Catalyzes the reversible conversion of 2-phosphoglycerate (2-PG) into phosphoenolpyruvate (PEP). It is essential for the degradation of carbohydrates via glycolysis. In Thermococcus onnurineus (strain NA1), this protein is Enolase.